Reading from the N-terminus, the 136-residue chain is NADPH-dependent 7-cyano-7-deazaguanine reductase (136 aa).

The Thioimide intermediate role is filled by Cys50. Asp57 functions as the Proton donor in the catalytic mechanism. Substrate is bound by residues 72–74 (YEL) and 91–92 (HE).

It belongs to the GTP cyclohydrolase I family. QueF type 1 subfamily.

Its subcellular location is the cytoplasm. It carries out the reaction 7-aminomethyl-7-carbaguanine + 2 NADP(+) = 7-cyano-7-deazaguanine + 2 NADPH + 3 H(+). It participates in tRNA modification; tRNA-queuosine biosynthesis. Its function is as follows. Catalyzes the NADPH-dependent reduction of 7-cyano-7-deazaguanine (preQ0) to 7-aminomethyl-7-deazaguanine (preQ1). This chain is NADPH-dependent 7-cyano-7-deazaguanine reductase, found in Prochlorococcus marinus (strain MIT 9215).